We begin with the raw amino-acid sequence, 2157 residues long: Genome polyprotein (2157 aa).

The N-myristoyl glycine; by host moiety is linked to residue glycine 2. Residues 2–1470 (GAQVSRQNVG…DLNIANSIIA (1469 aa)) are Cytoplasmic-facing. The amphipathic alpha-helix stretch occupies residues 567 to 584 (PIEQNPVENYIDEVLNEV). Catalysis depends on for protease 2A activity residues histidine 875 and aspartate 892. Positions 909 and 911 each coordinate Zn(2+). Residue cysteine 963 is the For protease 2A activity of the active site. 2 residues coordinate Zn(2+): cysteine 969 and histidine 971. The interval 1095-1164 (SDSWLKKFTE…NLRAADSATQ (70 aa)) is membrane-binding. Residues 1095–1228 (SDSWLKKFTE…PPGTGKSITT (134 aa)) are oligomerization. Residues 1116–1120 (GNKIS) form an RNA-binding region. The SF3 helicase domain occupies 1188–1350 (EAKRIKVLYN…YKDTQGKLDV (163 aa)). Residues cysteine 1357, cysteine 1368, and cysteine 1373 each coordinate Zn(2+). A C4-type; degenerate zinc finger spans residues 1357–1373 (CNVNTKIGNAKCCPFVC). The interval 1400 to 1407 (EDKRRRQV) is RNA-binding. The segment at 1411–1416 (MSAIFQ) is oligomerization. An intramembrane segment occupies 1471-1486 (IIANIISIAGIIFVIY). Residues 1487 to 2157 (KLFCSLQGPY…LLKHEWYEKF (671 aa)) lie on the Cytoplasmic side of the membrane. An O-(5'-phospho-RNA)-tyrosine modification is found at tyrosine 1496. A Peptidase C3 domain is found at 1515 to 1693 (GPEEEFGRSI…FSAMLLRSYF (179 aa)). Active-site for protease 3C activity residues include histidine 1554, glutamate 1585, and cysteine 1661. Residues 1925–2038 (DCIMAFDYTN…SYKYTLDMEA (114 aa)) enclose the RdRp catalytic domain. Mg(2+) contacts are provided by aspartate 1931 and aspartate 2024.

The protein belongs to the picornaviruses polyprotein family. As to quaternary structure, interacts with capsid protein VP1 and capsid protein VP3 to form heterotrimeric protomers. In terms of assembly, interacts with capsid protein VP0, and capsid protein VP3 to form heterotrimeric protomers. Five protomers subsequently associate to form pentamers which serve as building blocks for the capsid. Interacts with capsid protein VP2, capsid protein VP3 and capsid protein VP4 following cleavage of capsid protein VP0. Interacts with capsid protein VP1 and capsid protein VP3 in the mature capsid. As to quaternary structure, interacts with capsid protein VP0 and capsid protein VP1 to form heterotrimeric protomers. Five protomers subsequently associate to form pentamers which serve as building blocks for the capsid. Interacts with capsid protein VP4 in the mature capsid. Interacts with protein 2C; this interaction may be important for virion morphogenesis. In terms of assembly, interacts with capsid protein VP1 and capsid protein VP3. Homodimer. As to quaternary structure, homohexamer; forms a hexameric ring structure with 6-fold symmetry characteristic of AAA+ ATPases. Interacts (via N-terminus) with host RTN3 (via reticulon domain); this interaction is important for viral replication. Interacts with capsid protein VP3; this interaction may be important for virion morphogenesis. In terms of assembly, interacts with protein 3CD. Homodimer. Interacts with host GBF1. Interacts (via GOLD domain) with host ACBD3 (via GOLD domain); this interaction allows the formation of a viral protein 3A/ACBD3 heterotetramer with a 2:2 stoichiometry, which will stimulate the recruitment of host PI4KB in order to synthesize PI4P at the viral RNA replication sites. As to quaternary structure, interacts with RNA-directed RNA polymerase. In terms of assembly, interacts with protein 3AB and with RNA-directed RNA polymerase. Interacts with Viral protein genome-linked and with protein 3CD. The cofactor is Mg(2+). Specific enzymatic cleavages in vivo by the viral proteases yield processing intermediates and the mature proteins. Post-translationally, myristoylation is required for the formation of pentamers during virus assembly. Further assembly of 12 pentamers and a molecule of genomic RNA generates the provirion. In terms of processing, during virion maturation, immature virions are rendered infectious following cleavage of VP0 into VP4 and VP2. This maturation seems to be an autocatalytic event triggered by the presence of RNA in the capsid and it is followed by a conformational change infectious virion. Myristoylation is required during RNA encapsidation and formation of the mature virus particle. Post-translationally, VPg is uridylylated by the polymerase into VPg-pUpU. This acts as a nucleotide-peptide primer for the genomic RNA replication.

The protein resides in the virion. It localises to the host cytoplasm. It is found in the host cytoplasmic vesicle membrane. The protein localises to the host nucleus. The catalysed reaction is a ribonucleoside 5'-triphosphate + H2O = a ribonucleoside 5'-diphosphate + phosphate + H(+). It catalyses the reaction Selective cleavage of Tyr-|-Gly bond in the picornavirus polyprotein.. The enzyme catalyses RNA(n) + a ribonucleoside 5'-triphosphate = RNA(n+1) + diphosphate. It carries out the reaction Selective cleavage of Gln-|-Gly bond in the poliovirus polyprotein. In other picornavirus reactions Glu may be substituted for Gln, and Ser or Thr for Gly.. Replication or transcription is subject to high level of random mutations by the nucleotide analog ribavirin. In terms of biological role, forms an icosahedral capsid of pseudo T=3 symmetry with capsid proteins VP2 and VP3. The capsid is 300 Angstroms in diameter, composed of 60 copies of each capsid protein and enclosing the viral positive strand RNA genome. Capsid protein VP1 mainly forms the vertices of the capsid. Capsid protein VP1 interacts with host cell receptor to provide virion attachment to target host cells. This attachment induces virion internalization. Tyrosine kinases are probably involved in the entry process. After binding to its receptor, the capsid undergoes conformational changes. Capsid protein VP1 N-terminus (that contains an amphipathic alpha-helix) and capsid protein VP4 are externalized. Together, they shape a pore in the host membrane through which viral genome is translocated to host cell cytoplasm. Functionally, forms an icosahedral capsid of pseudo T=3 symmetry with capsid proteins VP2 and VP3. The capsid is 300 Angstroms in diameter, composed of 60 copies of each capsid protein and enclosing the viral positive strand RNA genome. Its function is as follows. Lies on the inner surface of the capsid shell. After binding to the host receptor, the capsid undergoes conformational changes. Capsid protein VP4 is released, Capsid protein VP1 N-terminus is externalized, and together, they shape a pore in the host membrane through which the viral genome is translocated into the host cell cytoplasm. Component of immature procapsids, which is cleaved into capsid proteins VP4 and VP2 after maturation. Allows the capsid to remain inactive before the maturation step. In terms of biological role, cysteine protease that cleaves viral polyprotein and specific host proteins. It is responsible for the autocatalytic cleavage between the P1 and P2 regions, which is the first cleavage occurring in the polyprotein. Also cleaves the host translation initiation factor EIF4G1, in order to shut down the capped cellular mRNA translation. Inhibits the host nucleus-cytoplasm protein and RNA trafficking by cleaving host members of the nuclear pores. Counteracts stress granule formation probably by antagonizing its assembly or promoting its dissassembly. Functionally, plays an essential role in the virus replication cycle by acting as a viroporin. Creates a pore in the host endoplasmic reticulum and as a consequence releases Ca2+ in the cytoplasm of infected cell. In turn, high levels of cytoplasmic calcium may trigger membrane trafficking and transport of viral ER-associated proteins to viroplasms, sites of viral genome replication. Its function is as follows. Induces and associates with structural rearrangements of intracellular membranes. Displays RNA-binding, nucleotide binding and NTPase activities. May play a role in virion morphogenesis and viral RNA encapsidation by interacting with the capsid protein VP3. Localizes the viral replication complex to the surface of membranous vesicles. Together with protein 3CD binds the Cis-Active RNA Element (CRE) which is involved in RNA synthesis initiation. Acts as a cofactor to stimulate the activity of 3D polymerase, maybe through a nucleid acid chaperone activity. In terms of biological role, localizes the viral replication complex to the surface of membranous vesicles. It inhibits host cell endoplasmic reticulum-to-Golgi apparatus transport and causes the disassembly of the Golgi complex, possibly through GBF1 interaction. This would result in depletion of MHC, trail receptors and IFN receptors at the host cell surface. Plays an essential role in viral RNA replication by recruiting ACBD3 and PI4KB at the viral replication sites, thereby allowing the formation of the rearranged membranous structures where viral replication takes place. Functionally, acts as a primer for viral RNA replication and remains covalently bound to viral genomic RNA. VPg is uridylylated prior to priming replication into VPg-pUpU. The oriI viral genomic sequence may act as a template for this. The VPg-pUpU is then used as primer on the genomic RNA poly(A) by the RNA-dependent RNA polymerase to replicate the viral genome. During genome replication, the VPg-RNA linkage is removed by the host TDP2, thereby accelerating replication. During the late stage of the replication cycle, host TDP2 is excluded from sites of viral RNA synthesis and encapsidation, allowing for the generation of progeny virions. Its function is as follows. Involved in the viral replication complex and viral polypeptide maturation. It exhibits protease activity with a specificity and catalytic efficiency that is different from protease 3C. Protein 3CD lacks polymerase activity. Protein 3CD binds to the 5'UTR of the viral genome. Major viral protease that mediates proteolytic processing of the polyprotein. Cleaves host EIF5B, contributing to host translation shutoff. Also cleaves host PABPC1, contributing to host translation shutoff. In terms of biological role, replicates the viral genomic RNA on the surface of intracellular membranes. May form linear arrays of subunits that propagate along a strong head-to-tail interaction called interface-I. Covalently attaches UMP to a tyrosine of VPg, which is used to prime RNA synthesis. The positive stranded RNA genome is first replicated at virus induced membranous vesicles, creating a dsRNA genomic replication form. This dsRNA is then used as template to synthesize positive stranded RNA genomes. ss(+)RNA genomes are either translated, replicated or encapsidated. This is Genome polyprotein from Homo sapiens (Human).